The sequence spans 223 residues: ATP synthase subunit a 2 (223 aa).

A run of 5 helical transmembrane segments spans residues 17–37, 77–97, 106–126, 173–193, and 195–215; these read VAIT…ALVC, FLPL…SGVL, KIET…YFGV, FIIG…LMAL, and ILVG…FIGA.

This sequence belongs to the ATPase A chain family. F-type ATPases have 2 components, CF(1) - the catalytic core - and CF(0) - the membrane proton channel. CF(1) has five subunits: alpha(3), beta(3), gamma(1), delta(1), epsilon(1). CF(0) has four main subunits: a, b, b' and c.

The protein resides in the cell inner membrane. Its function is as follows. Key component of the proton channel; it plays a direct role in the translocation of protons across the membrane. The chain is ATP synthase subunit a 2 from Bradyrhizobium sp. (strain BTAi1 / ATCC BAA-1182).